Consider the following 258-residue polypeptide: Acetylglutamate kinase (258 aa).

Substrate-binding positions include 44–45 (GG), arginine 66, and asparagine 158. ATP-binding positions include 181–186 (DVSGIL) and 209–211 (IIT).

Belongs to the acetylglutamate kinase family. ArgB subfamily. In terms of assembly, homodimer.

It localises to the cytoplasm. The catalysed reaction is N-acetyl-L-glutamate + ATP = N-acetyl-L-glutamyl 5-phosphate + ADP. It participates in amino-acid biosynthesis; L-arginine biosynthesis; N(2)-acetyl-L-ornithine from L-glutamate: step 2/4. Catalyzes the ATP-dependent phosphorylation of N-acetyl-L-glutamate. The sequence is that of Acetylglutamate kinase from Salmonella arizonae (strain ATCC BAA-731 / CDC346-86 / RSK2980).